We begin with the raw amino-acid sequence, 674 residues long: Protein tesmin/TSO1-like CXC 2 (674 aa).

2 stretches are compositionally biased toward polar residues: residues 1-16 (MDTP…TPIS) and 76-89 (THNS…NSVE). Disordered regions lie at residues 1–20 (MDTP…KSRF) and 69–113 (KESR…GLNI). Over residues 95–109 (STSHEEVPAEGEDTK) the composition is skewed to basic and acidic residues. The CRC domain occupies 373-498 (SCKRCNCKKS…RCEGCKNAFG (126 aa)). 2 disordered regions span residues 504–529 (SIDM…SQQN) and 623–655 (IPNI…RRNG). The segment covering 507–516 (MEAEQEEENE) has biased composition (acidic residues).

Belongs to the lin-54 family. As to expression, ubiquitous but expressed mostly in all the aerial organs with highest expression in flowers.

It is found in the nucleus. Its function is as follows. Plays a role in development of both male and female reproductive tissues. This is Protein tesmin/TSO1-like CXC 2 (TCX2) from Arabidopsis thaliana (Mouse-ear cress).